The following is a 374-amino-acid chain: Speckle-type POZ protein A (374 aa).

Residues 31–161 (KFSYMWTINN…DDKLTLFCEV (131 aa)) enclose the MATH domain. The tract at residues 71–191 (VNPKGLDEES…PECRLADELG (121 aa)) is required for nuclear localization. Residues 173–297 (QNTMNMVKVP…MCEEALCSNL (125 aa)) form the BTB domain. The segment at 297 to 355 (LSVENAAEILILADLHSADQLKTQAVDFINYHASDVMETSGWKSMVVSHPHLVAEAYRS) is homodimerization.

This sequence belongs to the Tdpoz family. Homodimer. Part of cullin-RING-based BCR (BTB-CUL3-RBX1) E3 ubiquitin-protein ligase complexes that contain CUL3 and SPOP, plus a target protein.

It localises to the nucleus. Its subcellular location is the nucleus speckle. Its pathway is protein modification; protein ubiquitination. Its function is as follows. Component of a cullin-RING-based BCR (BTB-CUL3-RBX1) E3 ubiquitin-protein ligase complex that mediates the ubiquitination of target proteins, leading most often to their proteasomal degradation. This Xenopus laevis (African clawed frog) protein is Speckle-type POZ protein A (spop-a).